Consider the following 1165-residue polypeptide: MASSSNTMEFEEDDSTVTQTSLPTTTSVLDKSRSLFGNSAVISTPARDSTPDGHIVDSSVITKSSVIIEAEDEPDVAADVTALDKEKAEDEPQCSAGKDAKSGESMNDSEKSESPIEEGEGETFEKKIISMDTSDDKLDIAESISVSNDTEKPEENEEKVVGDEDEEDIDDVQEDDEDEAPKKKTKKAVSTSDDDDLHEDDSPKGGSVSDEKEEPENEDDTEEPENEVEVESPVKEQADSGEPIENVNDDKASEPGVGEISQDSVDDSQKIGLDSKSPDGESEANEENQESQSSSRSTRRAKRVSATVSSTPSSNTPRRGGRGQKSEVNADETKTPIVSNSTPRRGRSSRGGDRDEVIDPTENVVGDSGVEETSPRKGRSRRSVATEDTSVTEEVENTEHPTEEETPKQGRGRRSAASSSATSSAVPTPRSTRGRGRKSQANEENLQEKETEDPTKTHDTNQAKSTRTPRGRRSNADAETMESVEAEKVETPTSSRRSTRAKPPAKSAPVTPAVTNKRTTVRGRKKQGSITEDPIEEADETIEETLPQKKGRGAAKSAPSSSKKSAEYDPYDLDTEMEHHPEPLKNIHMEVHNFGAVKYAKLGNSESKYSMTEKAAESRIAELQSSPAAKNRRSLADMTPGKDKMKHRVSSVGTSGRRSRAKKEEEHHENDIEMEDAPATATPASSNRGRKRKSEASDIKTPPAKKEPVIPLKNLSDEDQLLVDHPQDDNEPHAPGARVYAVFQKMFYPAVVLSERDGLGRYKVQFTVDNVIKDVPNSGIIPLRALSPGKTAVYNESDVRLDSGPNDISAAEWKKGKLTISIMDEDGEPTDEVKVVDWYDVSFDHSEWRDYVKSKDQSATAIVTSNITTISEATRARKPTTVSNQAKPKGRKKKGVDLVSSRGGSASPAEEEEKLLPMNEEAIGKNIFTGKVFMLTSANRSNSASVPSMFKKKNLMNFITQNGGIVTEQLNSFQERYSNYEPLLISDTYYRTHKYLAALARGVPCVNNTWLQACGEQGKCVDYTDYVLPAGASIFDESQDMPAPKNPSELLKGTTIYVHSTHSAREVTQTGPGGTFIEIWKPILELLGADVVDGDWETLDETGLKFDVVLVDGTFRDEVMEYADTIGASRVTSEWVIQTIILGKAPEPNAHPKFDPYRLHHRTRH.

Disordered regions lie at residues Met1–Thr26, Ala70–Glu578, Lys608–Lys713, and Thr874–Glu913. The segment covering Thr16–Thr26 has biased composition (low complexity). 3 stretches are compositionally biased toward basic and acidic residues: residues Lys98–Ser114, Thr123–Ile140, and Asp149–Gly162. Acidic residues-rich tracts occupy residues Asp163–Glu179, Glu211–Val230, and Gly280–Gln289. Polar residues predominate over residues Ala306–Pro317. Over residues Asn397 to Lys408 the composition is skewed to basic and acidic residues. Over residues Ser415–Ser431 the composition is skewed to low complexity. Over residues Leu446–Asn461 the composition is skewed to basic and acidic residues. Over residues Asp533–Glu543 the composition is skewed to acidic residues. Low complexity predominate over residues Ala554–Lys563. 2 stretches are compositionally biased toward basic and acidic residues: residues Lys662–Asp671 and Ser694–Pro708. The region spanning Ile923–Leu1028 is the BRCT domain.

Expressed in germ cells.

It is found in the nucleus. Functionally, may have a role in DNA double-strand break repair following gamma-irradiation. The chain is Protein hsr-9 from Caenorhabditis elegans.